Here is a 690-residue protein sequence, read N- to C-terminus: Guanylate cyclase soluble subunit alpha-1 (690 aa).

At S267 the chain carries Phosphoserine. The region spanning 481–608 (TMLFSDIVGF…NNVTLANKFE (128 aa)) is the Guanylate cyclase domain.

This sequence belongs to the adenylyl cyclase class-4/guanylyl cyclase family. In terms of assembly, the active enzyme is formed by a heterodimer of an alpha and a beta subunit. Heterodimer with GUCY1B1. The cofactor is Mg(2+). It depends on Mn(2+) as a cofactor.

The protein localises to the cytoplasm. The catalysed reaction is GTP = 3',5'-cyclic GMP + diphosphate. With respect to regulation, activated by nitric oxide in the presence of magnesium or manganese ions. The protein is Guanylate cyclase soluble subunit alpha-1 (GUCY1A1) of Canis lupus familiaris (Dog).